The sequence spans 165 residues: Transcription antitermination protein NusB (165 aa).

The tract at residues 1 to 27 (MISDDTDQFNPRDAKSPEIAKGKSAKR) is disordered. Residues 10 to 21 (NPRDAKSPEIAK) show a composition bias toward basic and acidic residues.

It belongs to the NusB family.

Involved in transcription antitermination. Required for transcription of ribosomal RNA (rRNA) genes. Binds specifically to the boxA antiterminator sequence of the ribosomal RNA (rrn) operons. This chain is Transcription antitermination protein NusB, found in Pseudomonas syringae pv. tomato (strain ATCC BAA-871 / DC3000).